Here is a 516-residue protein sequence, read N- to C-terminus: Probable serine/threonine-protein kinase WNK3 (516 aa).

Residues 22–280 form the Protein kinase domain; the sequence is GRYKEVLGKG…AKELLDDPFL (259 aa). ATP contacts are provided by residues 102–105 and Lys-152; that span reads TEVF. Asp-169 (proton acceptor) is an active-site residue. A disordered region spans residues 426-451; it reads SSPKAGAGDSRSPFAPRSNSKLSSAQ. The segment covering 442 to 451 has biased composition (polar residues); it reads RSNSKLSSAQ. Residues 457–490 adopt a coiled-coil conformation; it reads EVGVIVEKLESLLRKQREEIEEMQRDQERIVTEF.

It belongs to the protein kinase superfamily. Ser/Thr protein kinase family. WNK subfamily.

It carries out the reaction L-seryl-[protein] + ATP = O-phospho-L-seryl-[protein] + ADP + H(+). It catalyses the reaction L-threonyl-[protein] + ATP = O-phospho-L-threonyl-[protein] + ADP + H(+). Its function is as follows. May regulate flowering time by modulating the photoperiod pathway. The polypeptide is Probable serine/threonine-protein kinase WNK3 (WNK3) (Arabidopsis thaliana (Mouse-ear cress)).